The sequence spans 171 residues: Lipoprotein signal peptidase (171 aa).

3 helical membrane passes run 8 to 28 (SFLW…YIVV), 64 to 84 (WQQY…VYFL), and 96 to 118 (SAYA…NGFV). Active-site residues include Asp-120 and Asp-138. A helical membrane pass occupies residues 133 to 153 (VFNIADIAICIGAGLLALDAF).

The protein belongs to the peptidase A8 family.

The protein resides in the cell inner membrane. The enzyme catalyses Release of signal peptides from bacterial membrane prolipoproteins. Hydrolyzes -Xaa-Yaa-Zaa-|-(S,diacylglyceryl)Cys-, in which Xaa is hydrophobic (preferably Leu), and Yaa (Ala or Ser) and Zaa (Gly or Ala) have small, neutral side chains.. It functions in the pathway protein modification; lipoprotein biosynthesis (signal peptide cleavage). Functionally, this protein specifically catalyzes the removal of signal peptides from prolipoproteins. The protein is Lipoprotein signal peptidase of Haemophilus influenzae (strain 86-028NP).